Consider the following 209-residue polypeptide: Pyroglutamyl-peptidase 1 (209 aa).

Catalysis depends on residues E85, C149, and H168.

The protein belongs to the peptidase C15 family. Monomer.

The protein localises to the cytoplasm. It carries out the reaction Release of an N-terminal pyroglutamyl group from a polypeptide, the second amino acid generally not being Pro.. In terms of biological role, removes 5-oxoproline from various penultimate amino acid residues except L-proline. In Rattus norvegicus (Rat), this protein is Pyroglutamyl-peptidase 1 (Pgpep1).